The following is a 526-amino-acid chain: 4-alpha-glucanotransferase (526 aa).

Belongs to the disproportionating enzyme family.

The protein resides in the cytoplasm. It catalyses the reaction Transfers a segment of a (1-&gt;4)-alpha-D-glucan to a new position in an acceptor, which may be glucose or a (1-&gt;4)-alpha-D-glucan.. The chain is 4-alpha-glucanotransferase (malQ) from Chlamydia pneumoniae (Chlamydophila pneumoniae).